The chain runs to 517 residues: 2-isopropylmalate synthase (517 aa).

One can recognise a Pyruvate carboxyltransferase domain in the interval 7 to 269 (VIIFDTTLRD…ETGIDTTQIV (263 aa)). Residues Asp16, His204, His206, and Asn240 each contribute to the Mn(2+) site. Residues 395–517 (KFISQKISTE…KPKAQGSGTI (123 aa)) form a regulatory domain region.

This sequence belongs to the alpha-IPM synthase/homocitrate synthase family. LeuA type 1 subfamily. In terms of assembly, homodimer. Requires Mn(2+) as cofactor.

The protein resides in the cytoplasm. The enzyme catalyses 3-methyl-2-oxobutanoate + acetyl-CoA + H2O = (2S)-2-isopropylmalate + CoA + H(+). The protein operates within amino-acid biosynthesis; L-leucine biosynthesis; L-leucine from 3-methyl-2-oxobutanoate: step 1/4. In terms of biological role, catalyzes the condensation of the acetyl group of acetyl-CoA with 3-methyl-2-oxobutanoate (2-ketoisovalerate) to form 3-carboxy-3-hydroxy-4-methylpentanoate (2-isopropylmalate). This Neisseria meningitidis serogroup A / serotype 4A (strain DSM 15465 / Z2491) protein is 2-isopropylmalate synthase.